The chain runs to 280 residues: Vitamin B12-binding protein (280 aa).

The first 27 residues, 1–27, serve as a signal peptide directing secretion; it reads MMPLGLFPLPRAAAVLLISLLTLPAQA. Residues 30–277 enclose the Fe/B12 periplasmic-binding domain; the sequence is RVISLSPSTT…QMASIPTPVA (248 aa). Tyrosine 57 lines the cyanocob(III)alamin pocket. Residues cysteine 190 and cysteine 266 are joined by a disulfide bond.

The protein belongs to the BtuF family. As to quaternary structure, the complex is composed of two ATP-binding proteins (BtuD), two transmembrane proteins (BtuC) and a solute-binding protein (BtuF).

The protein localises to the periplasm. In terms of biological role, part of the ABC transporter complex BtuCDF involved in vitamin B12 import. Binds vitamin B12 and delivers it to the periplasmic surface of BtuC. The chain is Vitamin B12-binding protein from Yersinia pestis bv. Antiqua (strain Antiqua).